We begin with the raw amino-acid sequence, 437 residues long: GTPase Der (437 aa).

2 consecutive EngA-type G domains span residues 4–167 and 175–352; these read PVVA…AEKD and IRFS…DHQH. GTP-binding positions include 10–17, 57–61, 119–122, 181–188, 229–233, and 294–297; these read GRPNVGKS, DTGGI, NKVD, DTAGI, and NKWD. The KH-like domain occupies 353 to 437; that stretch reads RRIQSAVLND…PIRLIKRRRK (85 aa).

This sequence belongs to the TRAFAC class TrmE-Era-EngA-EngB-Septin-like GTPase superfamily. EngA (Der) GTPase family. Associates with the 50S ribosomal subunit.

GTPase that plays an essential role in the late steps of ribosome biogenesis. In Limosilactobacillus fermentum (strain NBRC 3956 / LMG 18251) (Lactobacillus fermentum), this protein is GTPase Der.